Consider the following 124-residue polypeptide: Multifunctional methyltransferase subunit TRM112 homolog B (124 aa).

Residues 2-120 (RLIVHNMLSC…SKGIPNMLLH (119 aa)) form the TRM112 domain.

The protein belongs to the TRM112 family. As to quaternary structure, interacts with TRM9. Expressed in anthers.

Acts as an activator of both rRNA/tRNA and protein methyltransferases. Required for TRM9 tRNA methyltransferase activity. This Arabidopsis thaliana (Mouse-ear cress) protein is Multifunctional methyltransferase subunit TRM112 homolog B.